An 82-amino-acid polypeptide reads, in one-letter code: Turripeptide Gsp9.2 (82 aa).

The first 23 residues, 1–23 (MMAKLMITVMMVLLLSLQQGADG), serve as a signal peptide directing secretion. Residues 24-46 (RSERWRKNQMAASSIMRNLITAR) constitute a propeptide that is removed on maturation. P49 and P50 each carry 4-hydroxyproline. 3 disulfides stabilise this stretch: C53–C68, C58–C72, and C64–C79. E56 carries the post-translational modification 4-carboxyglutamate.

The protein belongs to the Pg turripeptide superfamily. As to expression, expressed by the venom duct.

The protein resides in the secreted. The chain is Turripeptide Gsp9.2 from Gemmula speciosa (Splendid gem-turris).